The sequence spans 400 residues: Tryptophan synthase beta chain (400 aa).

K90 bears the N6-(pyridoxal phosphate)lysine mark.

The protein belongs to the TrpB family. Tetramer of two alpha and two beta chains. Requires pyridoxal 5'-phosphate as cofactor.

The enzyme catalyses (1S,2R)-1-C-(indol-3-yl)glycerol 3-phosphate + L-serine = D-glyceraldehyde 3-phosphate + L-tryptophan + H2O. Its pathway is amino-acid biosynthesis; L-tryptophan biosynthesis; L-tryptophan from chorismate: step 5/5. Functionally, the beta subunit is responsible for the synthesis of L-tryptophan from indole and L-serine. The polypeptide is Tryptophan synthase beta chain (Bacillus velezensis (strain DSM 23117 / BGSC 10A6 / LMG 26770 / FZB42) (Bacillus amyloliquefaciens subsp. plantarum)).